The following is a 1480-amino-acid chain: Cystic fibrosis transmembrane conductance regulator (1480 aa).

Residues M1 to F77 lie on the Cytoplasmic side of the membrane. A helical membrane pass occupies residues F78 to Q98. The region spanning F81–L365 is the ABC transmembrane type-1 1 domain. Residues P99–Y122 lie on the Extracellular side of the membrane. The helical transmembrane segment at L123–H146 threads the bilayer. Topologically, residues H147–L195 are cytoplasmic. Residues A196–W216 traverse the membrane as a helical segment. The Extracellular portion of the chain corresponds to E217–S222. A helical transmembrane segment spans residues V223–M243. Residues M244 to K298 are Cytoplasmic-facing. A helical transmembrane segment spans residues A299–F319. Topologically, residues L320–T339 are extracellular. A helical membrane pass occupies residues I340 to V358. Topologically, residues Q359–S858 are cytoplasmic. Residues W401, S434, G458 to T465, and Q493 each bind ATP. Residues N423 to G646 enclose the ABC transporter 1 domain. The S-palmitoyl cysteine moiety is linked to residue C524. Phosphoserine is present on residues S549 and S660. The disordered R region stretch occupies residues S654–E831. Residue S670 is modified to Phosphoserine; by PKA. A Phosphoserine modification is found at S686. K688 participates in a covalent cross-link: Glycyl lysine isopeptide (Lys-Gly) (interchain with G-Cter in ubiquitin). S700 and S712 each carry phosphoserine. Position 717 is a phosphothreonine (T717). Phosphoserine occurs at positions 737, 753, 768, 790, 795, and 813. A helical transmembrane segment spans residues L859–V879. An ABC transmembrane type-1 2 domain is found at L859 to S1155. The Extracellular portion of the chain corresponds to V880–I918. N-linked (GlcNAc...) asparagine glycosylation is found at N894, N900, and N909. The chain crosses the membrane as a discontinuously helical span at residues Y919–H939. Over T940–T990 the chain is Cytoplasmic. A helical membrane pass occupies residues I991 to L1011. At Q1012–P1013 the chain is on the extracellular side. A helical membrane pass occupies residues Y1014 to L1034. The Cytoplasmic portion of the chain corresponds to Q1035–T1095. The chain crosses the membrane as a helical span at residues L1096–F1116. At I1117–G1130 the chain is on the extracellular side. The chain crosses the membrane as a helical span at residues I1131–I1151. Residues D1152 to L1480 lie on the Cytoplasmic side of the membrane. The region spanning M1210–H1443 is the ABC transporter 2 domain. Residues Y1219 and G1244–S1251 contribute to the ATP site. An interaction with GORASP2 region spans residues R1386–L1480. C1395 carries the S-palmitoyl cysteine lipid modification. Residues S1444 and S1456 each carry the phosphoserine modification. Residues H1452 to L1480 are disordered. Positions E1470 to L1480 are enriched in acidic residues. The PDZ-binding motif lies at T1478–L1480.

This sequence belongs to the ABC transporter superfamily. ABCC family. CFTR transporter (TC 3.A.1.202) subfamily. Monomer; does not require oligomerization for channel activity. May form oligomers in the membrane. Interacts with SLC26A3, SLC26A6 and NHERF1. Interacts with SHANK2. Interacts with MYO6. Interacts (via C-terminus) with GOPC (via PDZ domain); this promotes CFTR internalization and thereby decreases channel activity. Interacts with SLC4A7 through NHERF1. Found in a complex with MYO5B and RAB11A. Interacts with ANO1. Interacts with SLC26A8. Interacts with AHCYL1; the interaction increases CFTR activity. Interacts with CSE1L. The core-glycosylated form interacts with GORASP2 (via PDZ GRASP-type 1 domain) in respone to ER stress. Interacts with MARCHF2; the interaction leads to CFTR ubiqtuitination and degradation. Interacts with ADGRG2. In terms of processing, N-glycosylated. Phosphorylated; cAMP treatment promotes phosphorylation and activates the channel. Dephosphorylation decreases the ATPase activity (in vitro). Phosphorylation at PKA sites activates the channel. Phosphorylation at PKC sites enhances the response to phosphorylation by PKA. Phosphorylated by AMPK; this inhibits channel activity. Post-translationally, ubiquitinated, leading to its degradation in the lysosome. Deubiquitination by USP10 in early endosomes enhances its endocytic recycling to the cell membrane. Ubiquitinated by RNF185 during ER stress. Ubiquitinated by MARCHF2.

The protein localises to the apical cell membrane. It is found in the early endosome membrane. The protein resides in the cell membrane. It localises to the recycling endosome membrane. Its subcellular location is the endoplasmic reticulum membrane. The protein localises to the nucleus. It carries out the reaction ATP + H2O + closed Cl(-) channel = ADP + phosphate + open Cl(-) channel.. The catalysed reaction is chloride(in) = chloride(out). It catalyses the reaction hydrogencarbonate(in) = hydrogencarbonate(out). The enzyme catalyses ATP + H2O = ADP + phosphate + H(+). Functionally, epithelial ion channel that plays an important role in the regulation of epithelial ion and water transport and fluid homeostasis. Mediates the transport of chloride ions across the cell membrane. Possesses an intrinsic ATPase activity and utilizes ATP to gate its channel; the passive flow of anions through the channel is gated by cycles of ATP binding and hydrolysis by the ATP-binding domains. The ion channel is also permeable to HCO(3)(-); selectivity depends on the extracellular chloride concentration. Exerts its function also by modulating the activity of other ion channels and transporters. Contributes to the regulation of the pH and the ion content of the epithelial fluid layer. Modulates the activity of the epithelial sodium channel (ENaC) complex, in part by regulating the cell surface expression of the ENaC complex. May regulate bicarbonate secretion and salvage in epithelial cells by regulating the transporter SLC4A7. Can inhibit the chloride channel activity of ANO1. Plays a role in the chloride and bicarbonate homeostasis during sperm epididymal maturation and capacitation. The protein is Cystic fibrosis transmembrane conductance regulator of Plecturocebus moloch (Dusky titi monkey).